Reading from the N-terminus, the 850-residue chain is Pierisin (850 aa).

3 consecutive Ricin B-type lectin domains span residues 267-409 (GEFM…WNII), 413-560 (FRPI…WDIK), and 564-707 (YQYV…WYLK).

Belongs to the pierisin ADP-ribosyltransferase family.

It carries out the reaction a 2'-deoxyguanosine in DNA + NAD(+) = an N(2)-(ADP-L-ribosyl)-2'-deoxyguanosine in DNA + nicotinamide + H(+). In terms of biological role, ADP-ribosylates double-stranded DNA by targeting the N2 amino group of dG residues. Induces apoptosis in a range of human cell lines. May play a role in destroying cells during pupation and/or defense against parasites. The sequence is that of Pierisin from Pieris brassicae (White butterfly).